The chain runs to 492 residues: Bifunctional protein GlmU (492 aa).

The pyrophosphorylase stretch occupies residues 1 to 241; the sequence is MTFRGDTAVV…SALVAGVNDR (241 aa). UDP-N-acetyl-alpha-D-glucosamine is bound by residues 12 to 15, Lys26, Gln83, and 88 to 89; these read LAAG and GT. Residue Asp114 coordinates Mg(2+). UDP-N-acetyl-alpha-D-glucosamine-binding residues include Gly151, Glu166, Asn181, and Asn239. Asn239 serves as a coordination point for Mg(2+). Residues 242–262 form a linker region; the sequence is VQLAQLGAELNRRIVAAHQMA. The interval 263 to 492 is N-acetyltransferase; it reads GVTVIDPATT…TPPPDADQTP (230 aa). Arg344 and Lys362 together coordinate UDP-N-acetyl-alpha-D-glucosamine. The active-site Proton acceptor is His374. Positions 377 and 388 each coordinate UDP-N-acetyl-alpha-D-glucosamine. Acetyl-CoA is bound by residues Ala391, 397–398, and Ala434; that span reads NY. Residues 451–492 form a disordered region; the sequence is GGPQRNIEDWVQQKRPGTPSAEAARKASAEQSTPPPDADQTP. Over residues 483–492 the composition is skewed to pro residues; that stretch reads TPPPDADQTP.

In the N-terminal section; belongs to the N-acetylglucosamine-1-phosphate uridyltransferase family. This sequence in the C-terminal section; belongs to the transferase hexapeptide repeat family. In terms of assembly, homotrimer. Requires Mg(2+) as cofactor.

The protein localises to the cytoplasm. It catalyses the reaction alpha-D-glucosamine 1-phosphate + acetyl-CoA = N-acetyl-alpha-D-glucosamine 1-phosphate + CoA + H(+). The enzyme catalyses N-acetyl-alpha-D-glucosamine 1-phosphate + UTP + H(+) = UDP-N-acetyl-alpha-D-glucosamine + diphosphate. Its pathway is nucleotide-sugar biosynthesis; UDP-N-acetyl-alpha-D-glucosamine biosynthesis; N-acetyl-alpha-D-glucosamine 1-phosphate from alpha-D-glucosamine 6-phosphate (route II): step 2/2. The protein operates within nucleotide-sugar biosynthesis; UDP-N-acetyl-alpha-D-glucosamine biosynthesis; UDP-N-acetyl-alpha-D-glucosamine from N-acetyl-alpha-D-glucosamine 1-phosphate: step 1/1. It participates in bacterial outer membrane biogenesis; LPS lipid A biosynthesis. Its function is as follows. Catalyzes the last two sequential reactions in the de novo biosynthetic pathway for UDP-N-acetylglucosamine (UDP-GlcNAc). The C-terminal domain catalyzes the transfer of acetyl group from acetyl coenzyme A to glucosamine-1-phosphate (GlcN-1-P) to produce N-acetylglucosamine-1-phosphate (GlcNAc-1-P), which is converted into UDP-GlcNAc by the transfer of uridine 5-monophosphate (from uridine 5-triphosphate), a reaction catalyzed by the N-terminal domain. This chain is Bifunctional protein GlmU, found in Mycobacterium marinum (strain ATCC BAA-535 / M).